Here is a 206-residue protein sequence, read N- to C-terminus: Adenine phosphoribosyltransferase (206 aa).

It belongs to the purine/pyrimidine phosphoribosyltransferase family. As to quaternary structure, homodimer.

The protein localises to the cytoplasm. The enzyme catalyses AMP + diphosphate = 5-phospho-alpha-D-ribose 1-diphosphate + adenine. Its pathway is purine metabolism; AMP biosynthesis via salvage pathway; AMP from adenine: step 1/1. In terms of biological role, catalyzes a salvage reaction resulting in the formation of AMP, that is energically less costly than de novo synthesis. The chain is Adenine phosphoribosyltransferase from Burkholderia mallei (strain NCTC 10229).